The chain runs to 1098 residues: Tudor domain-containing protein 7 (1098 aa).

The 74-residue stretch at 3–76 (EGDLVSKMLR…SGEITCYAMA (74 aa)) folds into the HTH OST-type 1 domain. The interval 129–156 (ASNFSVGKKPNPAPLRDKGNSVGVKPDA) is disordered. The 70-residue stretch at 233 to 302 (KMDEVQNRIK…GQDLLLYPAK (70 aa)) folds into the HTH OST-type 2 domain. Position 319 is a phosphoserine (Ser-319). The 70-residue stretch at 337 to 406 (MAGDFKEKVA…PQKAILYAKL (70 aa)) folds into the HTH OST-type 3 domain. 2 Tudor domains span residues 513 to 570 (AVNV…FCSL) and 703 to 760 (LPFC…FLQE). Residues 855-874 (SGADSPNSKNGNMPMSGNTG) form a disordered region. The residue at position 859 (Ser-859) is a Phosphoserine. The segment at 861-1098 (NSKNGNMPMS…EYLIELSKVN (238 aa)) is interaction with CDK17. Positions 893–1098 (TSAFSTEELP…EYLIELSKVN (206 aa)) are interaction with CABLES1.

The protein belongs to the TDRD7 family. As to quaternary structure, found in a mRNP complex, at least composed of TDRD1, TDRD6, TDRD7 and DDX4. Found in a complex containing CABLES1, CDK16 and CDK17. Interacts with CABLES1, CDK17 and PIWIL1.

The protein localises to the cytoplasm. Component of specific cytoplasmic RNA granules involved in post-transcriptional regulation of specific genes: probably acts by binding to specific mRNAs and regulating their translation. Required for lens transparency during lens development, by regulating translation of genes such as CRYBB3 and HSPB1 in the developing lens. Also required during spermatogenesis. This chain is Tudor domain-containing protein 7 (TDRD7), found in Homo sapiens (Human).